The following is a 104-amino-acid chain: UPF0213 protein YsiG (104 aa).

In terms of domain architecture, GIY-YIG spans 2–79 (NQYFTYILQC…KLVRKQKLSL (78 aa)).

The protein belongs to the UPF0213 family.

This Lactococcus lactis subsp. lactis (strain IL1403) (Streptococcus lactis) protein is UPF0213 protein YsiG (ysiG).